We begin with the raw amino-acid sequence, 472 residues long: Eukaryotic translation initiation factor 2 subunit 3 (472 aa).

Position 2 is an N-acetylalanine (alanine 2). At serine 16 the chain carries Phosphoserine. In terms of domain architecture, tr-type G spans 39–248 (QATINIGTIG…IVKKIPVPPR (210 aa)). Residues 48 to 55 (GHVAHGKS) form a G1 region. Residue 51–56 (AHGKST) coordinates GTP. The segment at 76 to 80 (NITIK) is G2. A G3 region spans residues 134–137 (DCPG). GTP-binding positions include 190–193 (NKID) and 225–227 (SAQ). Residues 190–193 (NKID) form a G4 region. Residues 225–227 (SAQ) are G5. An interacts with CDC123 region spans residues 457-469 (GQIRRGVTIKPTV).

This sequence belongs to the TRAFAC class translation factor GTPase superfamily. Classic translation factor GTPase family. EIF2G subfamily. As to quaternary structure, eukaryotic translation initiation factor 2 eIF2 is a heterotrimeric complex composed of an alpha (EIF2S1), a beta (EIF2S2) and a gamma (EIF2S3) chain. eIF2 is member of the 43S pre-initiation complex (43S PIC). Interacts (via C-terminus) with CDC123; the interaction is direct.

The protein localises to the cytoplasm. Its subcellular location is the cytosol. It carries out the reaction GTP + H2O = GDP + phosphate + H(+). Functionally, member of the eIF2 complex that functions in the early steps of protein synthesis by forming a ternary complex with GTP and initiator tRNA. This complex binds to a 40S ribosomal subunit, followed by mRNA binding to form the 43S pre-initiation complex (43S PIC). Junction of the 60S ribosomal subunit to form the 80S initiation complex is preceded by hydrolysis of the GTP bound to eIF2 and release of an eIF2-GDP binary complex. In order for eIF2 to recycle and catalyze another round of initiation, the GDP bound to eIF2 must exchange with GTP by way of a reaction catalyzed by eIF-2B. The sequence is that of Eukaryotic translation initiation factor 2 subunit 3 (EIF2S3) from Bos taurus (Bovine).